The following is a 534-amino-acid chain: Potential RNA-dependent RNA polymerase (534 aa).

Residues 255 to 373 (DVVVCTDFSK…TYPGISAEDV (119 aa)) enclose the RdRp catalytic domain.

Its subcellular location is the virion. The enzyme catalyses RNA(n) + a ribonucleoside 5'-triphosphate = RNA(n+1) + diphosphate. In terms of biological role, RNA-directed RNA polymerase that is involved in both transcription and genome replication. The sequence is that of Potential RNA-dependent RNA polymerase (Segment-2) from Human picobirnavirus (strain Human/Thailand/Hy005102/-) (PBV).